The sequence spans 1369 residues: ATP-dependent RNA helicase DHX29 (1369 aa).

2 disordered regions span residues 27–75 (SAEA…TNDS) and 176–226 (SQEF…KNME). 3 positions are modified to phosphoserine: Ser-71, Ser-192, and Ser-200. Positions 189 to 201 (KFQSPQIQATISP) are enriched in polar residues. Basic and acidic residues predominate over residues 208 to 226 (KTYEEDPKSKPKKEEKNME). Coiled coils occupy residues 222-256 (EKNM…EEEE), 283-310 (LEKN…LEDH), and 492-519 (IAKL…NSED). Positions 502–526 (QQQQQQQHSENKRENSEDPEESWEN) are disordered. The region spanning 582–755 (VETLKRHRVV…FTHCPILRIS (174 aa)) is the Helicase ATP-binding domain. 595-602 (GETGSGKS) is an ATP binding site. Positions 702 to 705 (DEVH) match the DEAH box motif. The Helicase C-terminal domain occupies 849–1026 (LILELLAYLD…ELCLHIMKCN (178 aa)).

The protein belongs to the DEAD box helicase family. DEAH subfamily. As to quaternary structure, part of the 43S pre-initiation complex (PIC) that contains at least Met-tRNA, EIF1, EIF1A (EIF1AX or EIF1AY), EIF2S1, EIF2S2, EIF2S3, EIF3A, EIF3B, EIF3C, EIF3D, EIF3E, EIF3F, EIF3G, EIF3H, EIF3I, EIF3J, EIF3K, EIF3L, EIF3M, DHX29 and the 40S ribosomal subunit.

It localises to the cytoplasm. The enzyme catalyses ATP + H2O = ADP + phosphate + H(+). ATP-binding RNA helicase involved in translation initiation. Part of the 43S pre-initiation complex that is required for efficient initiation on mRNAs of higher eukaryotes with structured 5'-UTRs by promoting efficient NTPase-dependent 48S complex formation. Specifically binds to the 40S ribosome near the mRNA entrance. Does not possess a processive helicase activity. The protein is ATP-dependent RNA helicase DHX29 of Homo sapiens (Human).